The primary structure comprises 82 residues: Putative antitoxin VapB23 (82 aa).

In terms of biological role, putative antitoxin component of a possible type II toxin-antitoxin (TA) system. The cognate toxin is VapC23. The sequence is that of Putative antitoxin VapB23 (vapB23) from Mycobacterium tuberculosis (strain ATCC 25618 / H37Rv).